Reading from the N-terminus, the 167-residue chain is Cofilin-2 (167 aa).

One can recognise an ADF-H domain in the interval 4–153; it reads GVTVNDEVIK…KDRCTLADKL (150 aa). Residues 30–34 carry the Nuclear localization signal motif; that stretch reads KKRKK.

Belongs to the actin-binding proteins ADF family.

It localises to the nucleus matrix. Its subcellular location is the cytoplasm. The protein localises to the cytoskeleton. Its function is as follows. Controls reversibly actin polymerization and depolymerization in a pH-sensitive manner. It has the ability to bind G- and F-actin in a 1:1 ratio of cofilin to actin. It is the major component of intranuclear and cytoplasmic actin rods. This chain is Cofilin-2 (cfl2), found in Xenopus tropicalis (Western clawed frog).